The following is a 719-amino-acid chain: Lanosterol synthase (719 aa).

The stretch at 118 to 160 (RIEVIRYLVNHANPEDGGWGIHIEGKSTVFGTALNYVVLRILG) is one PFTB 1 repeat. Asp-451 serves as the catalytic Proton donor. PFTB repeat units lie at residues 478–523 (LKDS…MIEH), 555–595 (VKNA…SCVK), and 604–645 (SRRA…VVQT).

Belongs to the terpene cyclase/mutase family.

It catalyses the reaction (S)-2,3-epoxysqualene = lanosterol. It participates in terpene metabolism; lanosterol biosynthesis; lanosterol from farnesyl diphosphate: step 3/3. Its function is as follows. Catalyzes the cyclization of (S)-2,3 oxidosqualene to lanosterol, a reaction that forms the sterol nucleus. This is Lanosterol synthase (ERG7) from Pneumocystis carinii.